Reading from the N-terminus, the 115-residue chain is Guanylin (115 aa).

Residues 1–23 form the signal peptide; the sequence is MNAWLLSVLCLLGALAVLVEGVT. A propeptide spanning residues 24–100 is cleaved from the precursor; that stretch reads VQDGDLSFPL…LQRLEAIAQD (77 aa). Cystine bridges form between cysteine 69–cysteine 82, cysteine 104–cysteine 112, and cysteine 107–cysteine 115.

The protein belongs to the guanylin family. In terms of tissue distribution, intestine and in low abundance in adrenal gland, kidney, and uterus/oviduct.

It is found in the secreted. Endogenous activator of intestinal guanylate cyclase. It stimulates this enzyme through the same receptor binding region as the heat-stable enterotoxins. The sequence is that of Guanylin (Guca2a) from Rattus norvegicus (Rat).